A 122-amino-acid chain; its full sequence is Small ribosomal subunit protein uS13 (122 aa).

Residues proline 97 to lysine 122 are disordered.

It belongs to the universal ribosomal protein uS13 family. Part of the 30S ribosomal subunit. Forms a loose heterodimer with protein S19. Forms two bridges to the 50S subunit in the 70S ribosome.

Its function is as follows. Located at the top of the head of the 30S subunit, it contacts several helices of the 16S rRNA. In the 70S ribosome it contacts the 23S rRNA (bridge B1a) and protein L5 of the 50S subunit (bridge B1b), connecting the 2 subunits; these bridges are implicated in subunit movement. Contacts the tRNAs in the A and P-sites. The chain is Small ribosomal subunit protein uS13 from Bartonella quintana (strain Toulouse) (Rochalimaea quintana).